Reading from the N-terminus, the 180-residue chain is Shikimate kinase (180 aa).

Residue 14 to 19 participates in ATP binding; it reads GAGKSS. Serine 18 contacts Mg(2+). Substrate-binding residues include aspartate 36, arginine 60, and glycine 82. Arginine 120 is a binding site for ATP. Arginine 139 contributes to the substrate binding site.

Belongs to the shikimate kinase family. Monomer. It depends on Mg(2+) as a cofactor.

The protein resides in the cytoplasm. The enzyme catalyses shikimate + ATP = 3-phosphoshikimate + ADP + H(+). The protein operates within metabolic intermediate biosynthesis; chorismate biosynthesis; chorismate from D-erythrose 4-phosphate and phosphoenolpyruvate: step 5/7. In terms of biological role, catalyzes the specific phosphorylation of the 3-hydroxyl group of shikimic acid using ATP as a cosubstrate. The polypeptide is Shikimate kinase (Xylella fastidiosa (strain M23)).